The following is a 598-amino-acid chain: MPCIQAQYGTPAPSPGPRDHLASDPLTPEFIKPTMDLASPEAAPAAPTALPSFSTFMDGYTGEFDTFLYQLPGTVQPCSSASSSASSTSSSSATSPASASFKFEDFQVYGCYPGPLSGPVDEALSSSGSDYYGSPCSAPSPSTPSFQPPQLSPWDGSFGHFSPSQTYEGLRAWTEQLPKASGPPQPPAFFSFSPPTGPSPSLAQSPLKLFPSQATHQLGEGESYSMPTAFPGLAPTSPHLEGSGILDTPVTSTKARSGAPGGSEGRCAVCGDNASCQHYGVRTCEGCKGFFKRTVQKNAKYICLANKDCPVDKRRRNRCQFCRFQKCLAVGMVKEVVRTDSLKGRRGRLPSKPKQPPDASPANLLTSLVRAHLDSGPSTAKLDYSKFQELVLPHFGKEDAGDVQQFYDLLSGSLEVIRKWAEKIPGFAELSPADQDLLLESAFLELFILRLAYRSKPGEGKLIFCSGLVLHRLQCARGFGDWIDSILAFSRSLHSLLVDVPAFACLSALVLITDRHGLQEPRRVEELQNRIASCLKEHVAAVAGEPQPASCLSRLLGKLPELRTLCTQGLQRIFYLKLEDLVPPPPIIDKIFMDTLPF.

Disordered regions lie at residues 1–44 (MPCI…EAAP), 131–158 (YYGS…DGSF), 177–206 (LPKA…AQSP), and 221–265 (GESY…GSEG). Residues 134-145 (SPCSAPSPSTPS) show a composition bias toward low complexity. A required for nuclear import region spans residues 171–466 (RAWTEQLPKA…PGEGKLIFCS (296 aa)). A DNA-binding region (nuclear receptor) is located at residues 264-339 (EGRCAVCGDN…VGMVKEVVRT (76 aa)). NR C4-type zinc fingers lie at residues 267 to 287 (CAVC…CEGC) and 303 to 327 (CLAN…FQKC). Residues 268-354 (AVCGDNASCQ…RRGRLPSKPK (87 aa)) form a required for binding NBRE-containing DNA region. The interval 299–361 (AKYICLANKD…KPKQPPDASP (63 aa)) is required for the interaction with RXRA. Phosphoserine; by PKA is present on serine 341. Positions 341–361 (SLKGRRGRLPSKPKQPPDASP) are disordered. Position 351 is a phosphoserine (serine 351). Residues 360 to 595 (SPANLLTSLV…PIIDKIFMDT (236 aa)) form the NR LBD domain. The binds lipopolysaccharide stretch occupies residues 521 to 544 (PRRVEELQNRIASCLKEHVAAVAG). Residues 584 to 595 (PPPIIDKIFMDT) are AF-2.

It belongs to the nuclear hormone receptor family. NR4 subfamily. As to quaternary structure, binds the NGFI-B response element (NBRE) as a monomer. Binds the Nur response element (NurRE), consisting of two inverse NBRE-related octanucleotide repeats separated by 6 base-pairs, as a dimer. Interacts (via N-terminus) with NLRP3 (via LRR repeat domain); the interaction is direct, requires binding of NR4A1/Nur77 to NBRE-containing dsDNA and lipopolysaccharide, and leads to non-canonical NLRP3 inflammasome activation. Interacts with GADD45GIP1. Interacts with STK11. Interacts with IFI27. Heterodimer (via DNA-binding domain) with RXRA (via C-terminus); DNA-binding of the heterodimer is enhanced by 9-cis retinoic acid. Competes for the RXRA interaction with EP300 and thereby attenuates EP300 mediated acetylation of RXRA. Interacts with NCOA1. Interacts with NCOA2. Interacts with NCOA3. Zn(2+) serves as cofactor. In terms of processing, phosphorylated at Ser-351 by RPS6KA1 and RPS6KA3 in response to mitogenic or stress stimuli. Acetylated by p300/CBP, acetylation increases stability. Deacetylated by HDAC1. As to expression, fetal muscle and adult liver, brain and thyroid.

It is found in the nucleus. The protein localises to the cytoplasm. It localises to the cytosol. The protein resides in the mitochondrion. Its activity is regulated as follows. Its transcription factor activity is activated by binding cytosporone B (Csn-B) via its ligand-binding (NR LBD) domain and stimulates recruitment of coactivators NCOA1 and NCOA2, but not NCOA3, to promoters. Csn-B-binding is also accompanied by its translocation to the mitochondrion. Its transcription factor activity is activated by corticotropin-releasing hormone (CRH) and forskolin. Not activated by binding cytosporone C (Csn-C). In terms of biological role, orphan nuclear receptor. Binds the NGFI-B response element (NBRE) 5'-AAAGGTCA-3'. Binds 9-cis-retinoic acid outside of its ligand-binding (NR LBD) domain. Participates in energy homeostasis by sequestrating the kinase STK11 in the nucleus, thereby attenuating cytoplasmic AMPK activation. Regulates the inflammatory response in macrophages by regulating metabolic adaptations during inflammation, including repressing the transcription of genes involved in the citric acid cycle (TCA). Inhibits NF-kappa-B signaling by binding to low-affinity NF-kappa-B binding sites, such as at the IL2 promoter. May act concomitantly with NR4A2 in regulating the expression of delayed-early genes during liver regeneration. Plays a role in the vascular response to injury. Functionally, in the cytosol, upon its detection of both bacterial lipopolysaccharide (LPS) and NBRE-containing mitochondrial DNA released by GSDMD pores during pyroptosis, it promotes non-canonical NLRP3 inflammasome activation by stimulating association of NLRP3 and NEK7. The chain is Nuclear receptor subfamily 4immunitygroup A member 1 (NR4A1) from Homo sapiens (Human).